Consider the following 152-residue polypeptide: Transcriptional repressor NrdR (152 aa).

A zinc finger spans residues 3 to 34 (CPFCGHADTQVVDSRVSEDGASIRRRRRCLEC). Positions 49-139 (PQVVKQDGHR…VYRSFQDVAE (91 aa)) constitute an ATP-cone domain.

The protein belongs to the NrdR family. The cofactor is Zn(2+).

Negatively regulates transcription of bacterial ribonucleotide reductase nrd genes and operons by binding to NrdR-boxes. The protein is Transcriptional repressor NrdR of Laribacter hongkongensis (strain HLHK9).